The following is a 92-amino-acid chain: Large ribosomal subunit protein bL25 (92 aa).

It belongs to the bacterial ribosomal protein bL25 family. In terms of assembly, part of the 50S ribosomal subunit; part of the 5S rRNA/L5/L18/L25 subcomplex. Contacts the 5S rRNA. Binds to the 5S rRNA independently of L5 and L18.

Functionally, this is one of the proteins that binds to the 5S RNA in the ribosome where it forms part of the central protuberance. The protein is Large ribosomal subunit protein bL25 of Vibrio campbellii (strain ATCC BAA-1116).